Reading from the N-terminus, the 389-residue chain is Phospho-N-acetylmuramoyl-pentapeptide-transferase (389 aa).

10 helical membrane passes run 21 to 41 (FITF…LFFG), 70 to 90 (GTPT…TLLW), 97 to 117 (FVWV…VDDY), 134 to 154 (YMWQ…SVSA), 189 to 209 (TISY…VIVG), 222 to 242 (GLAI…AYLT), 259 to 279 (AGEL…FLWF), 286 to 306 (VFMG…IAVI), 311 to 331 (IVLF…MIQV), and 366 to 386 (QVVV…LSTL).

This sequence belongs to the glycosyltransferase 4 family. MraY subfamily. Mg(2+) serves as cofactor.

It localises to the cell inner membrane. It catalyses the reaction UDP-N-acetyl-alpha-D-muramoyl-L-alanyl-gamma-D-glutamyl-meso-2,6-diaminopimeloyl-D-alanyl-D-alanine + di-trans,octa-cis-undecaprenyl phosphate = di-trans,octa-cis-undecaprenyl diphospho-N-acetyl-alpha-D-muramoyl-L-alanyl-D-glutamyl-meso-2,6-diaminopimeloyl-D-alanyl-D-alanine + UMP. It participates in cell wall biogenesis; peptidoglycan biosynthesis. Functionally, catalyzes the initial step of the lipid cycle reactions in the biosynthesis of the cell wall peptidoglycan: transfers peptidoglycan precursor phospho-MurNAc-pentapeptide from UDP-MurNAc-pentapeptide onto the lipid carrier undecaprenyl phosphate, yielding undecaprenyl-pyrophosphoryl-MurNAc-pentapeptide, known as lipid I. In Herminiimonas arsenicoxydans, this protein is Phospho-N-acetylmuramoyl-pentapeptide-transferase.